The chain runs to 239 residues: tRNA (guanine-N(1)-)-methyltransferase (239 aa).

S-adenosyl-L-methionine-binding positions include Gly-115 and 134-139; that span reads MGDFVL. A disordered region spans residues 210–239; that stretch reads QQQREQRTQERRPDLWNRWQQIQNPTPPAP. A compositionally biased stretch (basic and acidic residues) spans 211 to 224; the sequence is QQREQRTQERRPDL.

This sequence belongs to the RNA methyltransferase TrmD family. Homodimer.

It is found in the cytoplasm. It catalyses the reaction guanosine(37) in tRNA + S-adenosyl-L-methionine = N(1)-methylguanosine(37) in tRNA + S-adenosyl-L-homocysteine + H(+). Functionally, specifically methylates guanosine-37 in various tRNAs. This is tRNA (guanine-N(1)-)-methyltransferase from Synechococcus sp. (strain CC9311).